The sequence spans 139 residues: Protein FAM216B (139 aa).

Belongs to the FAM216 family.

The chain is Protein FAM216B (FAM216B) from Homo sapiens (Human).